Consider the following 660-residue polypeptide: MKTVVFAYHDMGCLGIEALLAAGYEISAIFTHTDNPGEKAFYGSVARLAAERGIPVYAPDNVNHPLWVERIAQLSPEVIFSFYYRHLICDEILQLAPAGAFNLHGSLLPKYRGRAPLNWVLVNGETETGVTLHRMVKRADAGAIVAQLRIAIAPDDIAITLHHKLCHAARQLLEQTLPAIKHGNILEIAQRENEATCFGRRTPEDSFLEWHKPASVLHNMVRAVADPWPGAFSYVGNQKFTVWSSRVHSHAPAAQPGSVISVAPLLIACGDGALEIVTGQAGDGITMQGSQLAQTLGLVQGSRLNSQPACAARRRTRVLILGVNGFIGNHLTERLLREDHYEVYGLDIGSDAISRFLNHPHFHFVEGDISIHSEWIEYHVKKCDVVLPLVAIATPIEYTRNPLRVFELDFEENLRIIRYCVKYRKRIIFPSTSEVYGMCSDKYFDEDHSNLIVGPVNKPRWIYSVSKQLLDRVIWAYGEKEGLQFTLFRPFNWMGPRLDNLNAARIGSSRAITQLILNLVEGSPIKLIDGGKQKRCFTDIRDGIEALYRIIENAGNRCDGEIINIGNPDNEASIEELGEMLLASFEKHPLRHHFPPFAGFRVVESSSYYGKGYQDVEHRKPSIRNARRCLDWEPKIDMQETIDETLDFFLRTVDLTDKPS.

Residues 1-304 (MKTVVFAYHD…TLGLVQGSRL (304 aa)) are formyltransferase ArnAFT. 86 to 88 (HLI) serves as a coordination point for (6R)-10-formyltetrahydrofolate. The active-site Proton donor; for formyltransferase activity is the His104. (6R)-10-formyltetrahydrofolate is bound by residues Arg114 and 136 to 140 (VKRAD). The interval 314–660 (RRTRVLILGV…RTVDLTDKPS (347 aa)) is dehydrogenase ArnADH. Residues Asp347 and 368–369 (DI) contribute to the NAD(+) site. Residues Ala393, Tyr398, and 432–433 (TS) contribute to the UDP-alpha-D-glucuronate site. The Proton acceptor; for decarboxylase activity role is filled by Glu434. Residues Arg460, Asn492, 526–535 (KLIDGGKQKR), and Tyr613 each bind UDP-alpha-D-glucuronate. Arg619 functions as the Proton donor; for decarboxylase activity in the catalytic mechanism.

The protein in the N-terminal section; belongs to the Fmt family. UDP-L-Ara4N formyltransferase subfamily. In the C-terminal section; belongs to the NAD(P)-dependent epimerase/dehydratase family. UDP-glucuronic acid decarboxylase subfamily. Homohexamer, formed by a dimer of trimers.

It catalyses the reaction UDP-alpha-D-glucuronate + NAD(+) = UDP-beta-L-threo-pentopyranos-4-ulose + CO2 + NADH. The catalysed reaction is UDP-4-amino-4-deoxy-beta-L-arabinose + (6R)-10-formyltetrahydrofolate = UDP-4-deoxy-4-formamido-beta-L-arabinose + (6S)-5,6,7,8-tetrahydrofolate + H(+). It participates in nucleotide-sugar biosynthesis; UDP-4-deoxy-4-formamido-beta-L-arabinose biosynthesis; UDP-4-deoxy-4-formamido-beta-L-arabinose from UDP-alpha-D-glucuronate: step 1/3. Its pathway is nucleotide-sugar biosynthesis; UDP-4-deoxy-4-formamido-beta-L-arabinose biosynthesis; UDP-4-deoxy-4-formamido-beta-L-arabinose from UDP-alpha-D-glucuronate: step 3/3. It functions in the pathway bacterial outer membrane biogenesis; lipopolysaccharide biosynthesis. In terms of biological role, bifunctional enzyme that catalyzes the oxidative decarboxylation of UDP-glucuronic acid (UDP-GlcUA) to UDP-4-keto-arabinose (UDP-Ara4O) and the addition of a formyl group to UDP-4-amino-4-deoxy-L-arabinose (UDP-L-Ara4N) to form UDP-L-4-formamido-arabinose (UDP-L-Ara4FN). The modified arabinose is attached to lipid A and is required for resistance to polymyxin and cationic antimicrobial peptides. The polypeptide is Bifunctional polymyxin resistance protein ArnA (Escherichia coli O17:K52:H18 (strain UMN026 / ExPEC)).